We begin with the raw amino-acid sequence, 469 residues long: Gustatory receptor for sugar taste 64f (469 aa).

The Cytoplasmic portion of the chain corresponds to 1–117 (MKILPKLERK…SFSWRNIRTC (117 aa)). Residues 118–138 (FSLLFIASSLANFGLSLFKVL) form a helical membrane-spanning segment. The Extracellular segment spans residues 139–146 (NNPISFNS). A helical membrane pass occupies residues 147–167 (IKPIIFRGSVLLVLIVALNLA). Residues 168–199 (RQWPQLMMYWHTVEKDLPQYKTQLTKWKMGHT) lie on the Cytoplasmic side of the membrane. The chain crosses the membrane as a helical span at residues 200-220 (ISMVMLLGMMLSFAEHILSMV). The Extracellular portion of the chain corresponds to 221-265 (SAINYASFCNRTADPIQNYFLRTNDEIFFVTSYSTTLALWGKFQN). An N-linked (GlcNAc...) asparagine glycan is attached at asparagine 230. Residues 266 to 286 (VFSTFIWNYMDLFVMIVSIGL) form a helical membrane-spanning segment. The Cytoplasmic segment spans residues 287 to 330 (ASKFRQLNDDLRNFKGMNMAPSYWSERRIQYRNICILCDKMDDA). A helical membrane pass occupies residues 331 to 351 (ISLITMVSFSNNLYFICVQLL). Topologically, residues 352–353 (RS) are extracellular. The helical transmembrane segment at 354–374 (LNTMPSVAHAVYFYFSLIFLI) threads the bilayer. The Cytoplasmic segment spans residues 375–435 (GRTLAVSLYS…GMKFFHLTRK (61 aa)). A helical transmembrane segment spans residues 436–456 (LVLSVAGTIVTYELVLIQFHE). At 457–469 (DNDLWDCDQSYYS) the chain is on the extracellular side.

Belongs to the insect chemoreceptor superfamily. Gustatory receptor (GR) family. Gr5a subfamily. In terms of tissue distribution, expressed in Gr5a-expressing sugar-sensing cells.

It localises to the cell membrane. Functionally, one of the few identified sugar gustatory receptors identified so far and which promotes the starvation-induced increase of feeding motivation. Required in combination with Gr64a to detect sucrose, maltose, and glucose. The polypeptide is Gustatory receptor for sugar taste 64f (Gr64f) (Drosophila melanogaster (Fruit fly)).